A 267-amino-acid polypeptide reads, in one-letter code: Hydroxyethylthiazole kinase 2 (267 aa).

Residue Met-41 coordinates substrate. ATP is bound by residues Lys-116 and Thr-166. A substrate-binding site is contributed by Gly-193.

This sequence belongs to the Thz kinase family. The cofactor is Mg(2+).

The enzyme catalyses 5-(2-hydroxyethyl)-4-methylthiazole + ATP = 4-methyl-5-(2-phosphooxyethyl)-thiazole + ADP + H(+). It participates in cofactor biosynthesis; thiamine diphosphate biosynthesis; 4-methyl-5-(2-phosphoethyl)-thiazole from 5-(2-hydroxyethyl)-4-methylthiazole: step 1/1. Its function is as follows. Catalyzes the phosphorylation of the hydroxyl group of 4-methyl-5-beta-hydroxyethylthiazole (THZ). The protein is Hydroxyethylthiazole kinase 2 of Streptococcus pneumoniae serotype 4 (strain ATCC BAA-334 / TIGR4).